The primary structure comprises 419 residues: Tyrosine--tRNA ligase (419 aa).

Tyr-34 provides a ligand contact to L-tyrosine. The short motif at 39 to 48 (PTADSLHLGH) is the 'HIGH' region element. Residues Tyr-169 and Gln-173 each contribute to the L-tyrosine site. Residues 229–233 (KFGKS) carry the 'KMSKS' region motif. Lys-232 serves as a coordination point for ATP. The region spanning 352–419 (LNIIDLLVTS…KKKYFVLNFK (68 aa)) is the S4 RNA-binding domain.

The protein belongs to the class-I aminoacyl-tRNA synthetase family. TyrS type 1 subfamily. As to quaternary structure, homodimer.

It is found in the cytoplasm. The enzyme catalyses tRNA(Tyr) + L-tyrosine + ATP = L-tyrosyl-tRNA(Tyr) + AMP + diphosphate + H(+). Its function is as follows. Catalyzes the attachment of tyrosine to tRNA(Tyr) in a two-step reaction: tyrosine is first activated by ATP to form Tyr-AMP and then transferred to the acceptor end of tRNA(Tyr). The polypeptide is Tyrosine--tRNA ligase (Streptococcus agalactiae serotype V (strain ATCC BAA-611 / 2603 V/R)).